The following is a 357-amino-acid chain: MKVNKEEYRGDYGEISLQPESLDDLWHLKYIVEPGDTVFAMTFRAVDSVSDKIRPDKVEKKLVRLGIKVESTEFHKFSNRLRIKGTIISDLDAGAYHTLNIEPYSELSIAKHWKSDQIERIRDAVEASKRPEVEIVTIEEGEAAIGYLRQYGIEEVSRIRQASSGKREGADARSVDGRGEFFGEVAAQLKYADKVQTIVVAGPGFIKDDFVKFLRVNHPAVAQKVIVEDTSSIGSSGFQEVLRRGAIQRVAEENRITREAQLIEALLSEIAKDGKATYGFAETKRAVDYGAVETLLIADETLRGLREKGARDIESLMRDVEHARGKVVVFSTEFEPGQRLEKLGGVASILRFPIGGD.

It belongs to the eukaryotic release factor 1 family. Pelota subfamily. In terms of assembly, monomer. The cofactor is a divalent metal cation.

Its subcellular location is the cytoplasm. Functionally, may function in recognizing stalled ribosomes, interact with stem-loop structures in stalled mRNA molecules, and effect endonucleolytic cleavage of the mRNA. May play a role in the release non-functional ribosomes and degradation of damaged mRNAs. Has endoribonuclease activity. This is Protein pelota homolog from Methanocella arvoryzae (strain DSM 22066 / NBRC 105507 / MRE50).